Consider the following 54-residue polypeptide: Salt stress-induced hydrophobic peptide ESI3 (54 aa).

The next 2 helical transmembrane spans lie at 2 to 22 (GSAT…GVFL) and 34 to 54 (LLLT…VLVV).

This sequence belongs to the UPF0057 (PMP3) family.

It localises to the membrane. In Thinopyrum elongatum (Tall wheatgrass), this protein is Salt stress-induced hydrophobic peptide ESI3 (ESI3).